Here is a 323-residue protein sequence, read N- to C-terminus: V-type ATP synthase subunit C (323 aa).

The protein belongs to the V-ATPase V0D/AC39 subunit family.

Functionally, produces ATP from ADP in the presence of a proton gradient across the membrane. The sequence is that of V-type ATP synthase subunit C from Thermus thermophilus (strain ATCC BAA-163 / DSM 7039 / HB27).